A 919-amino-acid chain; its full sequence is Probable glucan 1,3-alpha-glucosidase (919 aa).

Positions 1–28 are cleaved as a signal peptide; that stretch reads MDPPPRPRPHRVAVLLLLLLASSPAARA. Residue D510 is the Nucleophile of the active site. E513 is a catalytic residue. Catalysis depends on D586, which acts as the Proton donor. The N-linked (GlcNAc...) asparagine glycan is linked to N802.

This sequence belongs to the glycosyl hydrolase 31 family. Heterodimer of a catalytic alpha subunit and a beta subunit.

The protein resides in the endoplasmic reticulum. The enzyme catalyses N(4)-(alpha-D-Glc-(1-&gt;3)-alpha-D-Man-(1-&gt;2)-alpha-D-Man-(1-&gt;2)-alpha-D-Man-(1-&gt;3)-[alpha-D-Man-(1-&gt;2)-alpha-D-Man-(1-&gt;3)-[alpha-D-Man-(1-&gt;2)-alpha-D-Man-(1-&gt;6)]-alpha-D-Man-(1-&gt;6)]-beta-D-Man-(1-&gt;4)-beta-D-GlcNAc-(1-&gt;4)-beta-D-GlcNAc)-L-asparaginyl-[protein] + H2O = N(4)-(alpha-D-Man-(1-&gt;2)-alpha-D-Man-(1-&gt;2)-alpha-D-Man-(1-&gt;3)-[alpha-D-Man-(1-&gt;2)-alpha-D-Man-(1-&gt;3)-[alpha-D-Man-(1-&gt;2)-alpha-D-Man-(1-&gt;6)]-alpha-D-Man-(1-&gt;6)]-beta-D-Man-(1-&gt;4)-beta-D-GlcNAc-(1-&gt;4)-beta-D-GlcNAc)-L-asparaginyl-[protein] (N-glucan mannose isomer 9A1,2,3B1,2,3) + beta-D-glucose. It catalyses the reaction N(4)-(alpha-D-Glc-(1-&gt;3)-alpha-D-Glc-(1-&gt;3)-alpha-D-Man-(1-&gt;2)-alpha-D-Man-(1-&gt;2)-alpha-D-Man-(1-&gt;3)-[alpha-D-Man-(1-&gt;2)-alpha-D-Man-(1-&gt;3)-[alpha-D-Man-(1-&gt;2)-alpha-D-Man-(1-&gt;6)]-alpha-D-Man-(1-&gt;6)]-beta-D-Man-(1-&gt;4)-beta-D-GlcNAc-(1-&gt;4)-beta-D-GlcNAc)-L-asparaginyl-[protein] + H2O = N(4)-(alpha-D-Glc-(1-&gt;3)-alpha-D-Man-(1-&gt;2)-alpha-D-Man-(1-&gt;2)-alpha-D-Man-(1-&gt;3)-[alpha-D-Man-(1-&gt;2)-alpha-D-Man-(1-&gt;3)-[alpha-D-Man-(1-&gt;2)-alpha-D-Man-(1-&gt;6)]-alpha-D-Man-(1-&gt;6)]-beta-D-Man-(1-&gt;4)-beta-D-GlcNAc-(1-&gt;4)-beta-D-GlcNAc)-L-asparaginyl-[protein] + beta-D-glucose. It functions in the pathway glycan metabolism; N-glycan metabolism. Its function is as follows. Cleaves sequentially the 2 innermost alpha-1,3-linked glucose residues from the Glc(2)Man(9)GlcNAc(2) oligosaccharide precursor of immature glycoproteins. May be required for defense response elicited by pathogen-associated molecular patterns (PAMPs). In Oryza sativa subsp. japonica (Rice), this protein is Probable glucan 1,3-alpha-glucosidase.